Here is a 182-residue protein sequence, read N- to C-terminus: Large ribosomal subunit protein uL5 (182 aa).

The protein belongs to the universal ribosomal protein uL5 family. As to quaternary structure, part of the 50S ribosomal subunit; part of the 5S rRNA/L5/L18/L25 subcomplex. Contacts the 5S rRNA and the P site tRNA. Forms a bridge to the 30S subunit in the 70S ribosome.

In terms of biological role, this is one of the proteins that bind and probably mediate the attachment of the 5S RNA into the large ribosomal subunit, where it forms part of the central protuberance. In the 70S ribosome it contacts protein S13 of the 30S subunit (bridge B1b), connecting the 2 subunits; this bridge is implicated in subunit movement. Contacts the P site tRNA; the 5S rRNA and some of its associated proteins might help stabilize positioning of ribosome-bound tRNAs. This Trichormus variabilis (strain ATCC 29413 / PCC 7937) (Anabaena variabilis) protein is Large ribosomal subunit protein uL5.